The chain runs to 99 residues: UPF0751 protein BCE_A0020 (99 aa).

The protein belongs to the UPF0751 family.

This is UPF0751 protein BCE_A0020 from Bacillus cereus (strain ATCC 10987 / NRS 248).